Consider the following 508-residue polypeptide: Fc receptor-like protein 2 (508 aa).

The first 19 residues, 1–19 (MLLWSLLVIFDAVTEQADS), serve as a signal peptide directing secretion. 4 Ig-like C2-type domains span residues 20–98 (LTLV…SNIV), 109–187 (PVLT…HRIR), 201–290 (PISN…KVVN), and 300–387 (PVLT…VSIS). The Extracellular segment spans residues 20–401 (LTLVAPSSVF…YRRDLMTAGV (382 aa)). A disulfide bridge connects residues Cys-128 and Cys-177. Asn-204, Asn-234, Asn-343, Asn-355, and Asn-365 each carry an N-linked (GlcNAc...) asparagine glycan. Intrachain disulfides connect Cys-226–Cys-275 and Cys-321–Cys-368. A helical transmembrane segment spans residues 402–422 (LWGLFGVLGFTGVALLLYALF). At 423 to 508 (HKISGESSAT…QVIYSSVKKS (86 aa)) the chain is on the cytoplasmic side. Positions 429 to 453 (SSATNEPRGASRPNPQEFTYSSPTP) are disordered. Positions 441–452 (PNPQEFTYSSPT) are enriched in polar residues. Short sequence motifs (ITIM motif) lie at residues 446–451 (FTYSSP), 460–465 (PVYVNV), 472–477 (VVYSQV), and 500–505 (VIYSSV).

As to quaternary structure, the tyrosine-phosphorylated isoform 2 interacts with PTPN6. In terms of processing, isoform 2 is N- and O-glycosylated, and phosphorylated. Expressed in the secondary lymphoid organs, spleen and lymph node. Expression is limited to the mature B-cell lines. Highly expressed in CD19 and within the mantle zones of the tonsil tissue. Isoform 2 is expressed in the spleen, peripheral blood and bone marrow. Isoform 2 and isoform 4 are expressed in B-cell lines. Preferentially expressed in memory B-cells (at protein level).

The protein resides in the cell membrane. May have an regulatory role in normal and neoplastic B cell development. The protein is Fc receptor-like protein 2 (FCRL2) of Homo sapiens (Human).